The sequence spans 347 residues: Endophilin-A3 (347 aa).

Positions 1–21 are membrane-binding amphipathic helix; it reads MSVAGLKKQFHKASQLFSEKI. The BAR domain maps to 18-249; that stretch reads SEKISGAEGT…LELRIALASQ (232 aa). Positions 60-87 are required for dimerization upon membrane association; the sequence is PNPAYRAKLGMLNTMSKLRGQVKATGYP. Residues 180 to 201 are a coiled coil; it reads EEEIRQAVEKFEESKELAERSM. Positions 218 to 254 are interaction with ARC; it reads FVEAALDYHRQSTEILQELQNKLELRIALASQVPRRD. The interval 255 to 284 is disordered; the sequence is YMPKPVNTSSTNANGVEPSSSSKLTGTDIP. The segment covering 260–284 has biased composition (polar residues); it reads VNTSSTNANGVEPSSSSKLTGTDIP. The region spanning 285–344 is the SH3 domain; sequence SDQPCCRGLYDFEPENEGELGFKEGDIITLTNQIDENWYEGMLRGESGFFPINYVEVIVP.

The protein belongs to the endophilin family. In terms of assembly, interacts with SGIP1 and DYDC1. Interacts with FASLG. Interacts with ATXN2. Interacts with BIN2. Interacts with ARC, DNM1 and SYNJ1. In terms of tissue distribution, expressed at high level in testis and at lower level in brain and liver.

The protein resides in the cytoplasm. It is found in the early endosome membrane. Functionally, implicated in endocytosis. May recruit other proteins to membranes with high curvature. The polypeptide is Endophilin-A3 (Sh3gl3) (Rattus norvegicus (Rat)).